We begin with the raw amino-acid sequence, 409 residues long: Tryptophan synthase beta chain (409 aa).

Lys98 bears the N6-(pyridoxal phosphate)lysine mark.

This sequence belongs to the TrpB family. In terms of assembly, tetramer of two alpha and two beta chains. It depends on pyridoxal 5'-phosphate as a cofactor.

The catalysed reaction is (1S,2R)-1-C-(indol-3-yl)glycerol 3-phosphate + L-serine = D-glyceraldehyde 3-phosphate + L-tryptophan + H2O. It functions in the pathway amino-acid biosynthesis; L-tryptophan biosynthesis; L-tryptophan from chorismate: step 5/5. Functionally, the beta subunit is responsible for the synthesis of L-tryptophan from indole and L-serine. The chain is Tryptophan synthase beta chain (trpB) from Cereibacter sphaeroides (strain ATCC 17023 / DSM 158 / JCM 6121 / CCUG 31486 / LMG 2827 / NBRC 12203 / NCIMB 8253 / ATH 2.4.1.) (Rhodobacter sphaeroides).